The chain runs to 673 residues: Capsid protein (673 aa).

A disordered region spans residues 575 to 595 (NLPTDSSLESDSDSEPAPKKK).

Belongs to the anelloviridae capsid protein family.

Its subcellular location is the virion. Functionally, self-assembles to form an icosahedral capsid with a T=1 symmetry, about 30 nm in diameter, and consisting of 60 capsid proteins. The capsid encapsulates the genomic DNA. Capsid protein is involved in attachment and entry into the host cell. This chain is Capsid protein, found in Homo sapiens (Human).